The primary structure comprises 355 residues: UDP-3-O-acylglucosamine N-acyltransferase (355 aa).

The Proton acceptor role is filled by histidine 246.

It belongs to the transferase hexapeptide repeat family. LpxD subfamily. Homotrimer.

It carries out the reaction a UDP-3-O-[(3R)-3-hydroxyacyl]-alpha-D-glucosamine + a (3R)-hydroxyacyl-[ACP] = a UDP-2-N,3-O-bis[(3R)-3-hydroxyacyl]-alpha-D-glucosamine + holo-[ACP] + H(+). It participates in bacterial outer membrane biogenesis; LPS lipid A biosynthesis. Functionally, catalyzes the N-acylation of UDP-3-O-acylglucosamine using 3-hydroxyacyl-ACP as the acyl donor. Is involved in the biosynthesis of lipid A, a phosphorylated glycolipid that anchors the lipopolysaccharide to the outer membrane of the cell. The sequence is that of UDP-3-O-acylglucosamine N-acyltransferase from Polaromonas naphthalenivorans (strain CJ2).